The sequence spans 470 residues: FLYWCH transcription factor 2 (470 aa).

The disordered stretch occupies residues 102–148 (SQLISEDTRPSASSSPSSTATAVSNSGQSNATSTSSSSTEPEYKPRN). Over residues 111-140 (PSASSSPSSTATAVSNSGQSNATSTSSSST) the composition is skewed to low complexity. An FLYWCH-type zinc finger spans residues 145–204 (KPRNVREKVYADGYIMSFDKKSCCGTKEFWRCERKNDCNARMHSDINTREIVRKLHPHNH).

In terms of biological role, probable transcription factor. May bind to the promoters of target genes, including micro-RNA genes, in order to repress expression, and acting redundantly with flh-1 and flh-3. The protein is FLYWCH transcription factor 2 of Caenorhabditis elegans.